We begin with the raw amino-acid sequence, 306 residues long: tRNA dimethylallyltransferase (306 aa).

12–19 (GPTGTKKS) contributes to the ATP binding site.

The protein belongs to the IPP transferase family. In terms of assembly, monomer. Mg(2+) serves as cofactor.

It carries out the reaction adenosine(37) in tRNA + dimethylallyl diphosphate = N(6)-dimethylallyladenosine(37) in tRNA + diphosphate. Functionally, catalyzes the transfer of a dimethylallyl group onto the adenine at position 37 in tRNAs that read codons beginning with uridine, leading to the formation of N6-(dimethylallyl)adenosine (i(6)A). The chain is tRNA dimethylallyltransferase from Mycoplasmoides gallisepticum (strain R(low / passage 15 / clone 2)) (Mycoplasma gallisepticum).